The sequence spans 260 residues: Indole-3-glycerol phosphate synthase (260 aa).

It belongs to the TrpC family.

It catalyses the reaction 1-(2-carboxyphenylamino)-1-deoxy-D-ribulose 5-phosphate + H(+) = (1S,2R)-1-C-(indol-3-yl)glycerol 3-phosphate + CO2 + H2O. Its pathway is amino-acid biosynthesis; L-tryptophan biosynthesis; L-tryptophan from chorismate: step 4/5. The chain is Indole-3-glycerol phosphate synthase from Neisseria meningitidis serogroup C / serotype 2a (strain ATCC 700532 / DSM 15464 / FAM18).